The primary structure comprises 247 residues: MADS-box transcription factor 1 (247 aa).

One can recognise an MADS-box domain in the interval 1–61; it reads MGRGRVELKR…GKLYEFCSTS (61 aa). The 91-residue stretch at 91–181 folds into the K-box domain; that stretch reads ELSSQQEYLK…RQRMEGYQIN (91 aa).

Expressed abundantly in the seed coat and to lesser extent in young buds, carpels, petals, and stamen.

It is found in the nucleus. In terms of biological role, probable transcription factor. In Pisum sativum (Garden pea), this protein is MADS-box transcription factor 1.